Consider the following 317-residue polypeptide: SWI/SNF-related matrix-associated actin-dependent regulator of chromatin subfamily E member 1-related (317 aa).

Low complexity predominate over residues 1–22 (MSHGPKQPGAASAPASGKAPGQ). Residues 1 to 71 (MSHGPKQPGA…RKKILPNGPK (71 aa)) form a disordered region. Lys-31 is covalently cross-linked (Glycyl lysine isopeptide (Lys-Gly) (interchain with G-Cter in SUMO2)). Over residues 31-52 (KQERGEGPRAGEKGSHEEEPVK) the composition is skewed to basic and acidic residues. Residues 53–65 (KRGWPKGKKRKKI) are compositionally biased toward basic residues. A DNA-binding region (HMG box) is located at residues 70–138 (PKAPVTGYVR…QYMKELRAYQ (69 aa)). Residue Ser-160 is modified to Phosphoserine. The stretch at 190 to 257 (EEFLDQNKAR…LQQQLQAVRQ (68 aa)) forms a coiled coil.

In terms of assembly, component of a BHC histone deacetylase complex that contains HDAC1, HDAC2, HMG20B/BRAF35, KDM1A, RCOR1/CoREST and PHF21A/BHC80. The BHC complex may also contain ZMYM2, ZNF217, ZMYM3, GSE1 and GTF2I. Interacts with the BRCA2 tumor suppressor protein.

The protein resides in the nucleus. Its subcellular location is the chromosome. Its function is as follows. Required for correct progression through G2 phase of the cell cycle and entry into mitosis. Required for RCOR1/CoREST mediated repression of neuronal specific gene promoters. The chain is SWI/SNF-related matrix-associated actin-dependent regulator of chromatin subfamily E member 1-related (HMG20B) from Bos taurus (Bovine).